Reading from the N-terminus, the 52-residue chain is ERMES regulator 1 (52 aa).

The Mitochondrial intermembrane portion of the chain corresponds to 1–27; it reads MIFFFNQIRSIFTALHTPTQQIQLSRR. The helical transmembrane segment at 28–46 threads the bilayer; sequence AFFQFLGYLGSCVVISLAA. At 47–52 the chain is on the cytoplasmic side; the sequence is QSKYVQ.

The protein belongs to the EMR1 family.

The protein localises to the mitochondrion outer membrane. Mediates the formation of endoplasmic reticulum (ER)-mitochondria encounter structure (ERMES) foci, thereby contributing to the formation of ER-mitochondrial contact sites. This is ERMES regulator 1 from Saccharomyces cerevisiae (strain ATCC 204508 / S288c) (Baker's yeast).